A 426-amino-acid chain; its full sequence is MQLTPLHVTGGRQLGGEIAVQHSKNAALPIIVATLLSSEPITLHGIPRLSDVYTILELMHHLGTRHAWVGPNSLTLHTPEIENTDAPYALVSKMRASFIVLGAILARAGTATVSMPGGCAWGPRPVDQHVKALRALGAEVIEDGGNFFAHREGSLNGSFVFELLTVGGTHNAILAAALGEGTVTLENASIDTDVVDVIEFLNALGARIEGAGTNTITIHGVKELHGGEYTVIPDRIEAGTFMMLAAATRSRLTLTNVRPDHLRAVTSKLAEMGVDIQEDGNRMVVDARGRDLKPVNVTTQSYPGFPTDLQPQMSALLATVPGTSVIQDPVYPDRLTHVAELHRMGATITVSGYTQVIQGGTLHAAPVKAADLRAGAALFIAGLTCEGETVIDGVQYLNRGYERLAERLRGIGGEVMQPEPMLAADD.

Position 24–25 (24–25 (KN)) interacts with phosphoenolpyruvate. Residue arginine 95 coordinates UDP-N-acetyl-alpha-D-glucosamine. Cysteine 119 serves as the catalytic Proton donor. Cysteine 119 carries the post-translational modification 2-(S-cysteinyl)pyruvic acid O-phosphothioketal. UDP-N-acetyl-alpha-D-glucosamine is bound by residues 124-128 (RPVDQ), aspartate 308, and valine 330.

This sequence belongs to the EPSP synthase family. MurA subfamily.

It localises to the cytoplasm. It carries out the reaction phosphoenolpyruvate + UDP-N-acetyl-alpha-D-glucosamine = UDP-N-acetyl-3-O-(1-carboxyvinyl)-alpha-D-glucosamine + phosphate. Its pathway is cell wall biogenesis; peptidoglycan biosynthesis. Its function is as follows. Cell wall formation. Adds enolpyruvyl to UDP-N-acetylglucosamine. The chain is UDP-N-acetylglucosamine 1-carboxyvinyltransferase from Deinococcus radiodurans (strain ATCC 13939 / DSM 20539 / JCM 16871 / CCUG 27074 / LMG 4051 / NBRC 15346 / NCIMB 9279 / VKM B-1422 / R1).